We begin with the raw amino-acid sequence, 58 residues long: Large ribosomal subunit protein eL37 (58 aa).

The Zn(2+) site is built by C20, C23, C35, and C38. The C4-type zinc-finger motif lies at 20–38; it reads CRRCGEKSYHVKKERCSSC. A disordered region spans residues 39 to 58; that stretch reads GFGDSASRRGYAWQSKSGDN.

The protein belongs to the eukaryotic ribosomal protein eL37 family. Zn(2+) serves as cofactor.

Its function is as follows. Binds to the 23S rRNA. This chain is Large ribosomal subunit protein eL37, found in Halorubrum lacusprofundi (strain ATCC 49239 / DSM 5036 / JCM 8891 / ACAM 34).